We begin with the raw amino-acid sequence, 297 residues long: Calponin-1 (297 aa).

Positions 28–131 constitute a Calponin-homology (CH) domain; the sequence is HQREQELREW…STLLALASMA (104 aa). At serine 48 the chain carries Phosphoserine. Calponin-like repeat units lie at residues 164–189, 204–229, and 243–268; these read IGLQMGTNKFASQQGMTAYGTRRHLY, ISLQMGTNKGASQAGMTAPGTKRQIF, and VSLQMGSNKGASQRGMTVYGLPRQVY. Position 170 is a phosphothreonine; by ROCK2 (threonine 170). Serine 175 carries the phosphoserine; by ROCK2 modification. Phosphothreonine; by ROCK2 is present on residues threonine 180 and threonine 184. At threonine 259 the chain carries Phosphothreonine; by ROCK2.

This sequence belongs to the calponin family. As to quaternary structure, part of cGMP kinase signaling complex at least composed of ACTA2/alpha-actin, CNN1/calponin H1, PLN/phospholamban, PRKG1 and ITPR1. As to expression, smooth muscle, and tissues containing significant amounts of smooth muscle.

In terms of biological role, thin filament-associated protein that is implicated in the regulation and modulation of smooth muscle contraction. It is capable of binding to actin, calmodulin and tropomyosin. The interaction of calponin with actin inhibits the actomyosin Mg-ATPase activity. This Rattus norvegicus (Rat) protein is Calponin-1 (Cnn1).